The primary structure comprises 61 residues: MAKKSLIAKNKRPAKFSTQAYTRCERCGRPHSVYRKFKLCRVCFRELAHKGQIPGVTKASW.

The Zn(2+) site is built by Cys24, Cys27, Cys40, and Cys43.

The protein belongs to the universal ribosomal protein uS14 family. Zinc-binding uS14 subfamily. Part of the 30S ribosomal subunit. Contacts proteins S3 and S10. The cofactor is Zn(2+).

Binds 16S rRNA, required for the assembly of 30S particles and may also be responsible for determining the conformation of the 16S rRNA at the A site. The chain is Small ribosomal subunit protein uS14 from Streptococcus thermophilus (strain CNRZ 1066).